Here is a 94-residue protein sequence, read N- to C-terminus: Cell division topological specificity factor (94 aa).

This sequence belongs to the MinE family.

Prevents the cell division inhibition by proteins MinC and MinD at internal division sites while permitting inhibition at polar sites. This ensures cell division at the proper site by restricting the formation of a division septum at the midpoint of the long axis of the cell. The polypeptide is Cell division topological specificity factor (Alkaliphilus metalliredigens (strain QYMF)).